A 765-amino-acid polypeptide reads, in one-letter code: Myotubularin-related protein 10-A (765 aa).

Residues 209–650 form the Myotubularin phosphatase domain; the sequence is FETYSDWDRE…THIKLWKLCY (442 aa).

The protein belongs to the protein-tyrosine phosphatase family. Non-receptor class myotubularin subfamily.

The protein is Myotubularin-related protein 10-A (mtmr10-a) of Xenopus laevis (African clawed frog).